Here is a 156-residue protein sequence, read N- to C-terminus: Small ribosomal subunit protein uS7 (156 aa).

The protein belongs to the universal ribosomal protein uS7 family. As to quaternary structure, part of the 30S ribosomal subunit. Contacts proteins S9 and S11.

One of the primary rRNA binding proteins, it binds directly to 16S rRNA where it nucleates assembly of the head domain of the 30S subunit. Is located at the subunit interface close to the decoding center, probably blocks exit of the E-site tRNA. This chain is Small ribosomal subunit protein uS7, found in Photobacterium profundum (strain SS9).